Consider the following 356-residue polypeptide: MELKERLQALKSEAVDKVSQITDKKALQDIKVSYIGKKGVITGLMKEMKSLPNEEKPMFGQLVNDAKQTVESAIAEVEARIEAELVNKRLQSETIDITLPGKKLSPGSSHPLDRIVEDIEDLFIGLGYEIVEGFEVESDHYNFEALNLPKSHPARDMQDSFYISEEVLMRTHTSPVQARTLESRNGEGPVKIICPGKVYRRDSDDATHSHQFTQIEGLVVDENIKMSDLKGTLEYFAKKMFGEDREIRLRPSFFPFTEPSVEVDISCFKCKGKGCNVCKGTGWIEILGAGMVHPNVLEMAGFDSNKYSGFAFGMGPDRIAMLKYGIEDIRHFYTNDLRFIRQFLRLEDGGEPNVSK.

A Mg(2+)-binding site is contributed by E258.

This sequence belongs to the class-II aminoacyl-tRNA synthetase family. Phe-tRNA synthetase alpha subunit type 1 subfamily. In terms of assembly, tetramer of two alpha and two beta subunits. The cofactor is Mg(2+).

The protein localises to the cytoplasm. The catalysed reaction is tRNA(Phe) + L-phenylalanine + ATP = L-phenylalanyl-tRNA(Phe) + AMP + diphosphate + H(+). The protein is Phenylalanine--tRNA ligase alpha subunit of Macrococcus caseolyticus (strain JCSC5402) (Macrococcoides caseolyticum).